A 386-amino-acid polypeptide reads, in one-letter code: tRNA N6-adenosine threonylcarbamoyltransferase (386 aa).

A divalent metal cation contacts are provided by His141, His145, and Tyr162. Substrate is bound by residues 162 to 166, Asp194, Gly209, Glu213, and Asn315; that span reads YVSGG. An a divalent metal cation-binding site is contributed by Asp344.

It belongs to the KAE1 / TsaD family. Component of the EKC/KEOPS complex composed of at least BUD32, CGI121, GON7, KAE1 and PCC1; the whole complex dimerizes. A divalent metal cation serves as cofactor.

The protein resides in the cytoplasm. It localises to the nucleus. It carries out the reaction L-threonylcarbamoyladenylate + adenosine(37) in tRNA = N(6)-L-threonylcarbamoyladenosine(37) in tRNA + AMP + H(+). Component of the EKC/KEOPS complex that is required for the formation of a threonylcarbamoyl group on adenosine at position 37 (t(6)A37) in tRNAs that read codons beginning with adenine. The complex is probably involved in the transfer of the threonylcarbamoyl moiety of threonylcarbamoyl-AMP (TC-AMP) to the N6 group of A37. KAE1 likely plays a direct catalytic role in this reaction, but requires other protein(s) of the complex to fulfill this activity. The EKC/KEOPS complex also promotes both telomere uncapping and telomere elongation. The complex is required for efficient recruitment of transcriptional coactivators. In Saccharomyces cerevisiae (strain ATCC 204508 / S288c) (Baker's yeast), this protein is tRNA N6-adenosine threonylcarbamoyltransferase.